A 333-amino-acid polypeptide reads, in one-letter code: Cytochrome f (333 aa).

The signal sequence occupies residues M1–A37. The Cytoplasmic segment spans residues L38 to R298. Residues Y45, C66, C69, and H70 each contribute to the heme site. Residues V299 to K319 traverse the membrane as a helical segment. Residues K320–F333 lie on the Lumenal, thylakoid side of the membrane.

This sequence belongs to the cytochrome f family. The 4 large subunits of the cytochrome b6-f complex are cytochrome b6, subunit IV (17 kDa polypeptide, PetD), cytochrome f and the Rieske protein, while the 4 small subunits are PetG, PetL, PetM and PetN. The complex functions as a dimer. Heme serves as cofactor.

The protein localises to the cellular thylakoid membrane. In terms of biological role, component of the cytochrome b6-f complex, which mediates electron transfer between photosystem II (PSII) and photosystem I (PSI), cyclic electron flow around PSI, and state transitions. The protein is Cytochrome f (petA) of Mastigocladus laminosus (Fischerella sp.).